Reading from the N-terminus, the 150-residue chain is D-aminoacyl-tRNA deacylase (150 aa).

Positions 137-138 (GP) match the Gly-cisPro motif, important for rejection of L-amino acids motif.

Belongs to the DTD family. Homodimer.

Its subcellular location is the cytoplasm. It carries out the reaction glycyl-tRNA(Ala) + H2O = tRNA(Ala) + glycine + H(+). The catalysed reaction is a D-aminoacyl-tRNA + H2O = a tRNA + a D-alpha-amino acid + H(+). An aminoacyl-tRNA editing enzyme that deacylates mischarged D-aminoacyl-tRNAs. Also deacylates mischarged glycyl-tRNA(Ala), protecting cells against glycine mischarging by AlaRS. Acts via tRNA-based rather than protein-based catalysis; rejects L-amino acids rather than detecting D-amino acids in the active site. By recycling D-aminoacyl-tRNA to D-amino acids and free tRNA molecules, this enzyme counteracts the toxicity associated with the formation of D-aminoacyl-tRNA entities in vivo and helps enforce protein L-homochirality. The chain is D-aminoacyl-tRNA deacylase from Listeria monocytogenes serotype 4b (strain CLIP80459).